The sequence spans 150 residues: MFEVLVYMFENYFESDIHPDHETLSKELFAAGFDQEDINGAFDWYSALESMSEESDAQLGTAGIRIYSEAETKRLSADSLSFMMFLEQAKVLTPAQRELVIDRAMALSQPEVGLEETRWIVLMALWNQDKANDYLFVEDAMFNDNRPTLH.

Belongs to the Smg family.

The chain is Protein Smg homolog from Methylobacillus flagellatus (strain ATCC 51484 / DSM 6875 / VKM B-1610 / KT).